The chain runs to 360 residues: Ribosomal RNA large subunit methyltransferase M (360 aa).

Residues Ser-187, 220-223, Asp-239, Asp-259, and Asp-276 contribute to the S-adenosyl-L-methionine site; that span reads CPGG. The active-site Proton acceptor is Lys-305.

The protein belongs to the class I-like SAM-binding methyltransferase superfamily. RNA methyltransferase RlmE family. RlmM subfamily. Monomer.

The protein resides in the cytoplasm. The catalysed reaction is cytidine(2498) in 23S rRNA + S-adenosyl-L-methionine = 2'-O-methylcytidine(2498) in 23S rRNA + S-adenosyl-L-homocysteine + H(+). Functionally, catalyzes the 2'-O-methylation at nucleotide C2498 in 23S rRNA. The chain is Ribosomal RNA large subunit methyltransferase M from Photobacterium profundum (strain SS9).